Reading from the N-terminus, the 6857-residue chain is Replicase polyprotein 1ab (6857 aa).

The Macro domain occupies 1679–1860 (FEQYYEFKIG…QYNQAFAVIK (182 aa)). Residues 2158-2191 (QVGQGGQQDGQVDQQIKESEQVVEPSAPSGQESP) form a disordered region. 10 consecutive transmembrane segments (helical) span residues 2303–2323 (LTYNIKFKLICYVLFLWFGVL), 2330–2350 (TPFYMRLCIYLVLLWLSLMIW), 2385–2405 (LVQWFVLKCLFVSFYVYDYVV), 2535–2555 (LFYSGFLTFWLPLFCYYYVLF), 2639–2659 (VTVSNFGFFNPLMWPLFVVVL), 2664–2684 (FIWFFNVLSYVMMPVFVIILF), 2889–2909 (TTLVIVMGVLFMFMYSCLMVG), 3057–3077 (IISPYVFVFIVVIFTVIFLIL), 3106–3126 (VLFVVCLPPLVPGVVFVLALW), and 3142–3162 (LFILPWFYVLFFLFMVGGFVF). The segment at 2303 to 2683 (LTYNIKFKLI…VMMPVFVIIL (381 aa)) is HD1. The tract at residues 2889–3162 (TTLVIVMGVL…FLFMVGGFVF (274 aa)) is HD2. Catalysis depends on charge relay system; for 3C-like serine proteinase activity residues His-3304, Glu-3347, and Ser-3416. The HD3 stretch occupies residues 3555 to 3738 (HLHFIFSIYF…IVIVLSFRVF (184 aa)). 7 helical membrane passes run 3556–3575 (LHFIFSIYFLICDFVAYWWL), 3580–3602 (SVVLPLFFIVQLLSTVFLKNVLF), 3611–3631 (LAVTFYIHSEVAESMFLLGFL), 3640–3660 (SLIIVVAIMCLFVVVRVVVNV), 3663–3683 (AIFVFVVSVVLIFVHICLGIV), 3698–3718 (AVFTALLTPQPVVAIIMLLLF), and 3723–3738 (LMSFAFIVIVLSFRVF). A NiRAN domain is found at 4566–4797 (DFKLLRGAWS…ANEMEIPTDY (232 aa)). In terms of domain architecture, RdRp catalytic spans 5105–5256 (FDVFGSDYTK…FSKPEALKIF (152 aa)). The region spanning 5413-5528 (FDKVCFCCPN…NGVAQLLTSV (116 aa)) is the CV ZBD domain. Positions 5417, 5420, 5428, 5431, 5438, 5441, 5445, 5451, 5460, 5462, 5483, and 5486 each coordinate Zn(2+). In terms of domain architecture, (+)RNA virus helicase ATP-binding spans 5633-5812 (NQPWRLATCF…LQLATQKRYL (180 aa)). In terms of domain architecture, (+)RNA virus helicase C-terminal spans 5813–5972 (TACYRCPPQI…FGMEKQSDFN (160 aa)). An ExoN domain is found at 5970-6183 (DFNIIPEVSS…YLASYEAAFK (214 aa)). Residues Asp-5984, Glu-5986, and Asp-6085 contribute to the active site. Zn(2+) contacts are provided by His-6149, Cys-6153, and His-6157. Active-site residues include His-6161 and Asp-6166. Cys-6172 is a binding site for Zn(2+). Positions 6451–6591 (LPDTLFSTGR…GEDDIQTFYP (141 aa)) constitute a NendoU domain. Catalysis depends on residues His-6487, His-6504, Lys-6536, Lys-6633, Asp-6709, Lys-6737, and Glu-6771. Positions 6593 to 6857 (KDFVRSYYEW…EVPMLCQMEH (265 aa)) constitute a Nidovirus-type SAM-dependent 2'-O-MTase domain.

Specific enzymatic cleavages in vivo by its own protease yield mature proteins. 3CL-PRO is autocatalytically processed.

It localises to the host membrane. The catalysed reaction is RNA(n) + a ribonucleoside 5'-triphosphate = RNA(n+1) + diphosphate. It catalyses the reaction ATP + H2O = ADP + phosphate + H(+). The 3C-like serine proteinase is responsible for the majority of cleavages. Its function is as follows. The helicase which contains a zinc finger structure displays RNA and DNA duplex-unwinding activities with 5' to 3' polarity. In terms of biological role, acts on both ssRNA and dsRNA in a 3' to 5' direction. Functionally, nendoU is a Mn(2+)-dependent, uridylate-specific enzyme, which leaves 2'-3'-cyclic phosphates 5' to the cleaved bond. In Equus caballus (Horse), this protein is Replicase polyprotein 1ab (rep).